The sequence spans 748 residues: Acetyl-CoA decarbonylase/synthase complex subunit beta 1 (748 aa).

Positions 480, 483, 569, and 571 each coordinate [Ni-Fe-S] cluster.

The protein belongs to the CdhC family. In terms of assembly, monomer. The ACDS complex is made up of alpha, epsilon, beta, gamma and delta chains with a probable stoichiometry of (alpha(2)epsilon(2))(4)-beta(8)-(gamma(1)delta(1))(8) (Potential). The cofactor is [Ni-Fe-S] cluster.

It catalyses the reaction Co(I)-[corrinoid Fe-S protein] + acetyl-CoA + H(+) = methyl-Co(III)-[corrinoid Fe-S protein] + CO + CoA. Part of a complex that catalyzes the reversible cleavage of acetyl-CoA, allowing autotrophic growth from CO(2). The alpha-epsilon complex generates CO from CO(2), while the beta subunit (this protein) combines the CO with CoA and a methyl group to form acetyl-CoA. The methyl group, which is incorporated into acetyl-CoA, is transferred to the beta subunit by a corrinoid iron-sulfur protein (the gamma-delta complex). This Methanocaldococcus jannaschii (strain ATCC 43067 / DSM 2661 / JAL-1 / JCM 10045 / NBRC 100440) (Methanococcus jannaschii) protein is Acetyl-CoA decarbonylase/synthase complex subunit beta 1 (cdhC1).